The sequence spans 68 residues: Small ribosomal subunit protein bS21 (68 aa).

It belongs to the bacterial ribosomal protein bS21 family.

This Paracoccus denitrificans (strain Pd 1222) protein is Small ribosomal subunit protein bS21.